The following is a 567-amino-acid chain: TNF receptor-associated factor 3 (567 aa).

The interval 1-26 (MESSKKMDAAGTLQPNPPLKLQPDRG) is disordered. C55 is covalently cross-linked (Glycyl cysteine thioester (Cys-Gly) (interchain with G-Cter in ubiquitin)). An RING-type zinc finger spans residues 67-76 (CGHRFCESCM). Residue K106 forms a Glycyl lysine isopeptide (Lys-Gly) (interchain with G-Cter in ubiquitin) linkage. A Glycyl cysteine thioester (Cys-Gly) (interchain with G-Cter in ubiquitin) cross-link involves residue C123. TRAF-type zinc fingers lie at residues 134 to 189 (VHLK…IKLQ) and 190 to 248 (KHED…QQIK). Glycyl lysine isopeptide (Lys-Gly) (interchain with G-Cter in ubiquitin) cross-links involve residues K155 and K167. A coiled-coil region spans residues 266 to 337 (SNSLEKKVSL…KLKELDKEIR (72 aa)). A Glycyl lysine isopeptide (Lys-Gly) (interchain with G-Cter in ubiquitin) cross-link involves residue K328. Positions 414-559 (NGVLIWKIRD…DDTIFIKVIV (146 aa)) constitute an MATH domain.

This sequence belongs to the TNF receptor-associated factor family. A subfamily. In terms of assembly, homotrimer. Heterotrimer with TRAF2 and TRAF5. Interacts with LTBR/TNFRSF3, TNFRSF4, TNFRSF5/CD40, TNFRSF8/CD30, TNFRSF13C TNFRSF17/BCMA, TLR4 and EDAR. Interacts with MAP3K5, MAP3K14, TRAIP/TRIP, TDP2/TTRAP, TANK/ITRAF and TRAF3IP1. Interaction with TNFRSF5/CD40 is modulated by TANK/ITRAF, which competes for the same binding site. Interacts with TICAM1. Interacts with TRAFD1. Interacts with OTUB1, OTUB2 and OTUD5. Interacts with RNF216, OPTN and TBK1. Identified in a complex with TRAF2, MAP3K14 and BIRC3. Upon exposure to bacterial lipopolysaccharide (LPS), recruited to a transient complex containing TLR4, TRAF3, TRAF6, IKBKG, MAP3K7, MYD88, TICAM1, BIRC2, BIRC3 and UBE2N. Interacts (via RING-type zinc finger domain) with SRC. Interacts with CARD14. Interacts (via MATH domain) with PTPN22; the interaction promotes TRAF3 polyubiquitination. Interacts with MAVS. Directly interacts with DDX3X; this interaction stimulates TRAF3 'Lys-63' ubiquitination. Interacts with IRF3. Interacts with IKBKE in the course of viral infection. Interacts with TRIM35. Interacts with GAPDH; promoting TRAF3 ubiquitination. Interacts with PPP3CA and PPP3CB. Interacts with RALGDS. Interacts with FBXO11. Post-translationally, undergoes 'Lys-48'-linked polyubiquitination, leading to its proteasomal degradation in response to signaling by TNFSF13B, TLR4 or through CD40. 'Lys-48'-linked polyubiquitinated form is deubiquitinated by OTUD7B, preventing TRAF3 proteolysis and over-activation of non-canonical NF-kappa-B. Undergoes 'Lys-63'-linked ubiquitination during early stages of virus infection, and 'Lys-48'-linked ubiquitination during later stages. Undergoes both 'Lys-48'-linked and 'Lys-63'-linked ubiquitination in response to TLR3 and TLR4 signaling. 'Lys-63'-linked ubiquitination can be mediated by TRIM35. Deubiquitinated by OTUB1, OTUB2 and OTUD5. Undergoes 'Lys-63'-linked deubiquitination by MYSM1 to terminate the pattern-recognition receptors/PRRs pathways. Ubiquitinated at Lys-328 by the SCF(FBXL2) complex, leading to its degradation by the proteasome. In terms of processing, undergoes 'Lys-48'-linked polyubiquitination, leading to its proteasomal degradation in response to signaling by TNFSF13B, TLR4 or through CD40. 'Lys-48'-linked polyubiquitinated form is deubiquitinated by OTUD7B, preventing TRAF3 proteolysis and over-activation of non-canonical NF-kappa-B. Undergoes 'Lys-63'-linked ubiquitination during early stages of virus infection, and 'Lys-48'-linked ubiquitination during later stages. Undergoes both 'Lys-48'-linked and 'Lys-63'-linked ubiquitination in response to TLR3 and TLR4 signaling. 'Lys-63'-linked ubiquitination can be mediated by TRIM35. Deubiquitinated by OTUB1, OTUB2 and OTUD5. Undergoes 'Lys-63'-linked deubiquitination by MYSM1 to terminate the pattern-recognition receptors/PRRs pathways. Also undergoes 'Lys-29'-linked ubiquitination on Cys-55 and Cys-123 by NEDD4L; leading to increased 'Lys-48'- and 'Lys-63'-linked ubiquitination as well as increased binding to TBK1. TLR4 signals emanating from bacteria containing vesicles trigger 'Lys-33'-linked polyubiquitination that promotes the assembly of the exocyst complex thereby connecting innate immune signaling to the cellular trafficking apparatus. Deubiquitinated by USP25 during viral infection, leading to TRAF3 stabilization and type I interferon production. 'Lys-63'-linked ubiquitination by FBXO11 in a NEDD8-dependent manner promotes the amplification of IFN-I signaling. In terms of tissue distribution, detected in bone marrow macrophages and spleen B-cells (at protein level). In adult, highest in brain. Also found in kidney, heart, thymus, spleen, lung, muscle, testis and ovary. Not found in liver.

It localises to the cytoplasm. The protein resides in the endosome. Its subcellular location is the mitochondrion. It carries out the reaction S-ubiquitinyl-[E2 ubiquitin-conjugating enzyme]-L-cysteine + [acceptor protein]-L-lysine = [E2 ubiquitin-conjugating enzyme]-L-cysteine + N(6)-ubiquitinyl-[acceptor protein]-L-lysine.. Cytoplasmic E3 ubiquitin ligase that regulates various signaling pathways, such as the NF-kappa-B, mitogen-activated protein kinase (MAPK) and interferon regulatory factor (IRF) pathways, and thus controls a lot of biological processes in both immune and non-immune cell types. In TLR and RLR signaling pathways, acts as an E3 ubiquitin ligase promoting the synthesis of 'Lys-63'-linked polyubiquitin chains on several substrates such as ASC that lead to the activation of the type I interferon response or the inflammasome. Following the activation of certain TLRs such as TLR4, acts as a negative NF-kappa-B regulator, possibly to avoid unregulated inflammatory response, and its degradation via 'Lys-48'-linked polyubiquitination is required for MAPK activation and production of inflammatory cytokines. Alternatively, when TLR4 orchestrates bacterial expulsion, TRAF3 undergoes 'Lys-33'-linked polyubiquitination and subsequently binds to RALGDS, mobilizing the exocyst complex to rapidly expel intracellular bacteria back for clearance. Also acts as a constitutive negative regulator of the alternative NF-kappa-B pathway, which controls B-cell survival and lymphoid organ development. Required for normal antibody isotype switching from IgM to IgG. Plays a role T-cell dependent immune responses. Down-regulates proteolytic processing of NFKB2, and thereby inhibits non-canonical activation of NF-kappa-B. Promotes ubiquitination and proteasomal degradation of MAP3K14. This chain is TNF receptor-associated factor 3, found in Mus musculus (Mouse).